Consider the following 128-residue polypeptide: Putative pre-16S rRNA nuclease (128 aa).

This sequence belongs to the YqgF nuclease family.

The protein resides in the cytoplasm. Could be a nuclease involved in processing of the 5'-end of pre-16S rRNA. The polypeptide is Putative pre-16S rRNA nuclease (Sulfurovum sp. (strain NBC37-1)).